The sequence spans 1919 residues: Disks large homolog 5 (1919 aa).

The tract at residues 98-142 (AEGAGSTYSVLSTMPSDSESSSSLSSVGTTGKAPSPPPLLTDQQV) is disordered. Over residues 109 to 123 (STMPSDSESSSSLSS) the composition is skewed to low complexity. Phosphoserine is present on residues S264 and S295. Residues 383–599 (LNKATAQNKD…LEKEARFRQL (217 aa)) adopt a coiled-coil conformation. PDZ domains follow at residues 620-710 (VVEF…RRRK) and 705-796 (VVRR…LKVF). S900 bears the Phosphoserine mark. Disordered regions lie at residues 927–1122 (GVGE…FRPK), 1150–1187 (QEWA…PSTT), 1201–1230 (SHRV…HQGR), 1245–1264 (EMRA…LGSS), and 1271–1306 (AERI…PQSP). T984 carries the phosphothreonine modification. S1000 carries the phosphoserine modification. At T1011 the chain carries Phosphothreonine. Over residues 1017 to 1030 (RRSDSIKFQHRLET) the composition is skewed to basic and acidic residues. Residue S1021 is modified to Phosphoserine. Pro residues predominate over residues 1045–1055 (TSPPSALPPDV). T1183 is subject to Phosphothreonine. 2 positions are modified to phosphoserine: S1209 and S1263. 2 stretches are compositionally biased toward low complexity: residues 1252–1264 (SNSL…LGSS) and 1284–1298 (RSVV…SHSE). At S1334 the chain carries Phosphoserine. The PDZ 3 domain occupies 1350-1429 (HVKVQKGSEP…TITILAQYNP (80 aa)). A disordered region spans residues 1434 to 1493 (LSSHSRSSSHLDPAGTHSTLQGSGTTTPEHPSVIDPLMEQDEGPSTPPAKQSSSRIAGDA). A compositionally biased stretch (polar residues) spans 1449 to 1462 (THSTLQGSGTTTPE). Residues 1501–1582 (RVVFIKKSQL…GVRLKVQYRP (82 aa)) form the PDZ 4 domain. Positions 1593–1661 (GDSFYIRALY…PSKYVMDQEF (69 aa)) constitute an SH3 domain. The residue at position 1666 (S1666) is a Phosphoserine. A Guanylate kinase-like domain is found at 1722 to 1905 (DSVSLAYQRV…ICTQILAMVN (184 aa)).

It belongs to the MAGUK family. Interacts with MPP1. Interacts with CTNNB1 and with the third SH3 domain of SORBS3 to form a ternary complex. Interacts (via coiled-coil domain) with MARK3. Interacts (via PDZ domain 3) with STK3/MST2 and STK4/MST1. Interacts with SCRIB. Interacts with CTNB1, SMO and (via PDZ4 or guanylate kinase-like domain) with KIF7. As to expression, highly expressed in normal breast tissues and low-grade breast cancer tissues (at protein level). Highly expressed in the placenta and prostate. Expressed at a lower level in the thyroid, spinal cord, trachea, adrenal gland, skeletal muscle, pancreas, heart, brain, liver and kidney. A short splice product shows more limited expression, being absent from at least the brain.

It is found in the cell junction. It localises to the cell membrane. The protein localises to the postsynaptic density. Its subcellular location is the cytoplasm. The protein resides in the cytoskeleton. It is found in the cilium basal body. In terms of biological role, acts as a regulator of the Hippo signaling pathway. Negatively regulates the Hippo signaling pathway by mediating the interaction of MARK3 with STK3/4, bringing them together to promote MARK3-dependent hyperphosphorylation and inactivation of STK3 kinase activity toward LATS1. Positively regulates the Hippo signaling pathway by mediating the interaction of SCRIB with STK4/MST1 and LATS1 which is important for the activation of the Hippo signaling pathway. Involved in regulating cell proliferation, maintenance of epithelial polarity, epithelial-mesenchymal transition (EMT), cell migration and invasion. Plays an important role in dendritic spine formation and synaptogenesis in cortical neurons; regulates synaptogenesis by enhancing the cell surface localization of N-cadherin. Acts as a positive regulator of hedgehog (Hh) signaling pathway. Plays a critical role in the early point of the SMO activity cycle by interacting with SMO at the ciliary base to induce the accumulation of KIF7 and GLI2 at the ciliary tip for GLI2 activation. The protein is Disks large homolog 5 (DLG5) of Homo sapiens (Human).